The sequence spans 160 residues: Cytochrome b6-f complex subunit 4 (160 aa).

A run of 3 helical transmembrane segments spans residues 36–56, 95–115, and 131–151; these read LLYIFPVVILGTIACVVGLAV, LLGIALQTLIPLGLILIPFIE, and AFFLFGTALTIYLGIGACLPI.

It belongs to the cytochrome b family. PetD subfamily. In terms of assembly, the 4 large subunits of the cytochrome b6-f complex are cytochrome b6, subunit IV (17 kDa polypeptide, PetD), cytochrome f and the Rieske protein, while the 4 small subunits are PetG, PetL, PetM and PetN. The complex functions as a dimer.

Its subcellular location is the cellular thylakoid membrane. Its function is as follows. Component of the cytochrome b6-f complex, which mediates electron transfer between photosystem II (PSII) and photosystem I (PSI), cyclic electron flow around PSI, and state transitions. The sequence is that of Cytochrome b6-f complex subunit 4 from Prochlorococcus marinus (strain SARG / CCMP1375 / SS120).